The sequence spans 101 residues: Enhancer of yellow 2 transcription factor (101 aa).

It belongs to the ENY2 family. In terms of assembly, component of the nuclear pore complex (NPC)-associated TREX-2/AMEX complex (anchoring and mRNA export complex), composed of e(y)2, xmas and PCID2. Within the TREX-2/ AMEX complex, interactions with xmas is required for localization to the nuclear periphery. Component of the SAGA transcription coactivator-HAT complexes, at least composed of Ada2b, e(y)2, Pcaf/Gcn5, Taf10 and Nipped-A/Trrap. Within the SAGA complex, e(y)2, Sgf11, and not/nonstop form an additional subcomplex of SAGA called the DUB module (deubiquitination module). Component of the THO complex, composed of at least e(y)2, HPR1, THO2, THOC5, THOC6 and THOC7. Interacts with Taf9. Interacts with su(Hw) (via zinc fingers). Interacts with the nuclear pore complex (NPC). Interaction between the TREX-2/AMEX complex and the ORC complex is required for ORC localization to mRNPs, and consequently mRNA export. Within the TREX-2/AMEX-ORC complex, interacts with Orc6 and (via N-terminus or C-terminus) with Orc3. Interacts with the zinc finger protein CG9890. Ubiquitous.

The protein resides in the nucleus. The protein localises to the nucleoplasm. It localises to the cytoplasm. Its subcellular location is the nucleus membrane. Functionally, involved in mRNA export coupled transcription activation by association with both the TREX-2/AMEX and the SAGA complexes. The SAGA complex is a multiprotein complex that activates transcription by remodeling chromatin and mediating histone acetylation and deubiquitination. Within the SAGA complex, participates in a subcomplex that specifically deubiquitinates histone H2B. The SAGA complex is recruited to specific gene promoters by activators, where it is required for transcription. Required for nuclear receptor-mediated transactivation. Involved in transcription elongation by recruiting the THO complex onto nascent mRNA. The TREX-2/AMEX complex functions in docking export-competent ribonucleoprotein particles (mRNPs) to the nuclear entrance of the nuclear pore complex (nuclear basket). TREX-2/AMEX participates in mRNA export and accurate chromatin positioning in the nucleus by tethering genes to the nuclear periphery. Recruited to the su(Hw) insulators via its interaction with su(Hw) and participates in the barrier activity of such insulators. In contrast, it does not participate in the enhancer-blocking activity of the su(Hw) insulators. The polypeptide is Enhancer of yellow 2 transcription factor (Drosophila melanogaster (Fruit fly)).